We begin with the raw amino-acid sequence, 135 residues long: Large ribosomal subunit protein uL16c (135 aa).

Belongs to the universal ribosomal protein uL16 family. As to quaternary structure, part of the 50S ribosomal subunit.

It localises to the plastid. Its subcellular location is the chloroplast. The sequence is that of Large ribosomal subunit protein uL16c from Lepidium virginicum (Virginia pepperweed).